Consider the following 486-residue polypeptide: Secreted protein C (486 aa).

The signal sequence occupies residues 1-22; the sequence is MKINIILLFVGLILAFAVLSNA. The segment at 30 to 332 is disordered; that stretch reads GVNPFDNNNS…SGSHGGSSSH (303 aa). An N-linked (GlcNAc...) asparagine glycan is attached at Asn-37. Positions 41–60 are enriched in gly residues; it reads SGSGSGSGGGSSSSGSGTGQ. A compositionally biased stretch (low complexity) spans 61 to 318; that stretch reads SSGTVSSSGS…TGSSEYSSSS (258 aa). Asn-73, Asn-74, Asn-83, Asn-112, Asn-129, Asn-149, and Asn-174 each carry an N-linked (GlcNAc...) asparagine glycan.

The protein belongs to the Sct family.

It is found in the secreted. In Dictyostelium discoideum (Social amoeba), this protein is Secreted protein C.